A 1192-amino-acid chain; its full sequence is Protein WWC2 (1192 aa).

WW domains are found at residues 10-43 (LPLP…DPRD) and 57-90 (DELP…DPRK). Coiled coils occupy residues 121–194 (KEQR…YKEQ) and 224–256 (ELKS…FHLD). Phosphoserine is present on serine 286. Residues 302 to 421 (LAEKVRLSLQ…KLEETTKLTT (120 aa)) adopt a coiled-coil conformation. Residues 441–462 (SSLGSLASSRGSLNTSSRGSLN) form a disordered region. One can recognise a C2 domain in the interval 698 to 821 (ETAQVQIGLR…FSSEVFTLWY (124 aa)). Positions 859–887 (ALLARTSAELLAVEQELAQEEEEESGQEE) form a coiled coil. Disordered regions lie at residues 873 to 895 (QELA…DGDW) and 911 to 991 (EAEV…SRQH). Positions 875–885 (LAQEEEEESGQ) are enriched in acidic residues. The segment covering 923-933 (TEDLSSCTSVP) has biased composition (polar residues). Over residues 938-951 (DGNRKESNCAKDLR) the composition is skewed to basic and acidic residues. Threonine 1004 is subject to Phosphothreonine. Serine 1022 bears the Phosphoserine mark. The segment at 1031–1050 (SLFVRNSTERRSLRVKRTVC) is interaction with PRKCZ. Positions 1068–1144 (DLELDLQASL…EQKQGLNAEK (77 aa)) form a coiled coil. The span at 1124-1137 (QAEKQAEQSKEEQK) shows a compositional bias: basic and acidic residues. A disordered region spans residues 1124 to 1143 (QAEKQAEQSKEEQKQGLNAE).

This sequence belongs to the WWC family. As to quaternary structure, forms homodimers and heterodimers with WWC1 and WWC3. Interacts with DLC1 and PRKCZ. Interacts (via WW domains) with LATS1 and LATS2.

It localises to the cytoplasm. The protein resides in the cytosol. In terms of biological role, regulator of the Hippo signaling pathway, also known as the Salvador-Warts-Hippo (SWH) pathway. Enhances phosphorylation of LATS1 and YAP1 and negatively regulates cell proliferation and organ growth due to a suppression of the transcriptional activity of YAP1, the major effector of the Hippo pathway. The chain is Protein WWC2 from Homo sapiens (Human).